Consider the following 240-residue polypeptide: MTKIRTVSDAKRKFFTHYSRPISSIYRRFVEELLVEMHLLSVNIDFTYDPIFALGIVTSFNSFMQGYQPAEQLPAIFNALCHGVDQNPDQVRQDAKNVAASAHHIGLDAWVTAAASEQASGDNLLLNTLTGIHQRHKFKYSRLFAIGLYTLLADQDPEVKDNDEKRQDYLTRLSELLDLSLDKVVKDLDLYRSNLEKVDQLLKVLEDAAEAERKKKEKQAASTTPAIEEAPVTTAESSES.

The stretch at lysine 186 to serine 222 forms a coiled coil. A disordered region spans residues glutamate 212–serine 240.

The protein belongs to the THF1 family.

In terms of biological role, may be involved in photosynthetic membrane biogenesis. The protein is Protein Thf1 of Synechocystis sp. (strain ATCC 27184 / PCC 6803 / Kazusa).